A 308-amino-acid chain; its full sequence is Elongation factor Ts (308 aa).

The involved in Mg(2+) ion dislocation from EF-Tu stretch occupies residues 80 to 83 (TDFV).

The protein belongs to the EF-Ts family.

Its subcellular location is the cytoplasm. Associates with the EF-Tu.GDP complex and induces the exchange of GDP to GTP. It remains bound to the aminoacyl-tRNA.EF-Tu.GTP complex up to the GTP hydrolysis stage on the ribosome. In Rhizobium johnstonii (strain DSM 114642 / LMG 32736 / 3841) (Rhizobium leguminosarum bv. viciae), this protein is Elongation factor Ts.